Here is a 387-residue protein sequence, read N- to C-terminus: UDP-Gal:alpha-D-GlcNAc-diphosphoundecaprenol alpha-1,3-galactosyltransferase (387 aa).

This sequence belongs to the glycosyltransferase group 1 family. Glycosyltransferase 4 subfamily. Mg(2+) serves as cofactor. Requires Mn(2+) as cofactor. Fe(2+) is required as a cofactor.

It catalyses the reaction N-acetyl-alpha-D-glucosaminyl-di-trans,octa-cis-undecaprenyl diphosphate + UDP-alpha-D-galactose = alpha-D-Gal-(1-&gt;3)-alpha-D-GlcNAc-di-trans,octa-cis-undecaprenyl diphosphate + UDP + H(+). It participates in bacterial outer membrane biogenesis; LPS O-antigen biosynthesis. Functionally, involved in the biosynthesis of the lipopolysaccharide (LPS) O-antigen region. Catalyzes the transfer of galactose from UDP-galactose to GlcNAc-undecaprenyl diphosphate via an alpha1,3-linkage. Has strict substrate specificity. This chain is UDP-Gal:alpha-D-GlcNAc-diphosphoundecaprenol alpha-1,3-galactosyltransferase, found in Escherichia coli.